The sequence spans 75 residues: F1845 fimbrial adhesin operon regulatory protein DaaF (75 aa).

May have a possible regulatory function on the expression of the other daa genes. This is F1845 fimbrial adhesin operon regulatory protein DaaF (daaF) from Escherichia coli.